We begin with the raw amino-acid sequence, 473 residues long: Photosystem II CP43 reaction center protein (473 aa).

Positions 1 to 14 (MKTLYSLRRFYPVE) are excised as a propeptide. At Thr15 the chain carries N-acetylthreonine. A Phosphothreonine modification is found at Thr15. 5 helical membrane passes run 69–93 (LFEV…PHLA), 134–155 (LLGP…KDRN), 178–200 (KALY…RKIT), 255–275 (KPFA…LSYS), and 291–312 (WFNN…ASQA). Glu367 provides a ligand contact to [CaMn4O5] cluster. Residues 447 to 471 (RARAAAAGFEKGIDRDFEPVLSMTP) traverse the membrane as a helical segment.

It belongs to the PsbB/PsbC family. PsbC subfamily. PSII is composed of 1 copy each of membrane proteins PsbA, PsbB, PsbC, PsbD, PsbE, PsbF, PsbH, PsbI, PsbJ, PsbK, PsbL, PsbM, PsbT, PsbX, PsbY, PsbZ, Psb30/Ycf12, at least 3 peripheral proteins of the oxygen-evolving complex and a large number of cofactors. It forms dimeric complexes. It depends on Binds multiple chlorophylls and provides some of the ligands for the Ca-4Mn-5O cluster of the oxygen-evolving complex. It may also provide a ligand for a Cl- that is required for oxygen evolution. PSII binds additional chlorophylls, carotenoids and specific lipids. as a cofactor.

Its subcellular location is the plastid. The protein localises to the chloroplast thylakoid membrane. Functionally, one of the components of the core complex of photosystem II (PSII). It binds chlorophyll and helps catalyze the primary light-induced photochemical processes of PSII. PSII is a light-driven water:plastoquinone oxidoreductase, using light energy to abstract electrons from H(2)O, generating O(2) and a proton gradient subsequently used for ATP formation. The chain is Photosystem II CP43 reaction center protein from Panax ginseng (Korean ginseng).